A 383-amino-acid polypeptide reads, in one-letter code: 4-hydroxy-3-methylbut-2-en-1-yl diphosphate synthase (flavodoxin) (383 aa).

Residues cysteine 275, cysteine 278, cysteine 310, and glutamate 317 each contribute to the [4Fe-4S] cluster site.

Belongs to the IspG family. [4Fe-4S] cluster is required as a cofactor.

The enzyme catalyses (2E)-4-hydroxy-3-methylbut-2-enyl diphosphate + oxidized [flavodoxin] + H2O + 2 H(+) = 2-C-methyl-D-erythritol 2,4-cyclic diphosphate + reduced [flavodoxin]. The protein operates within isoprenoid biosynthesis; isopentenyl diphosphate biosynthesis via DXP pathway; isopentenyl diphosphate from 1-deoxy-D-xylulose 5-phosphate: step 5/6. Its function is as follows. Converts 2C-methyl-D-erythritol 2,4-cyclodiphosphate (ME-2,4cPP) into 1-hydroxy-2-methyl-2-(E)-butenyl 4-diphosphate. This Dinoroseobacter shibae (strain DSM 16493 / NCIMB 14021 / DFL 12) protein is 4-hydroxy-3-methylbut-2-en-1-yl diphosphate synthase (flavodoxin).